A 451-amino-acid chain; its full sequence is MLRLCFLLSFMCLVKSDTDETCPSFTRLSFHSAVVGTGLSVRLMLYTQRDQTCAQVINSTALGSLNVTKKTTFIIHGFRPTGSPPVWMEELVQSLISVQEMNVVVVDWNRGATTVIYPHASSKTRKVALILKEFIDQMLAKGASLDNIYMIGVSLGAHIAGFVGEMYSGKLGRITGLDPAGPLFNGRPPEDRLDPSDAQFVDVIHSDTDALGYREALGHIDFYPNGGLDQPGCPKTIFGGIKYFKCDHQMSVFLYLASLQNNCSITAYPCDSYRDYRNGKCVSCGAGHIVSCPSLGYYADNWREYLWDRDPPMTKAFFDTAETKPYCIYHYFVDIISWNKSVRRGFITIKLRGEDGNITESKIDHEPSAFQKYHQVSLLARFNRDLDKVAEISLLFSTKSVVGPKYKLRVLRMKLRSLAHPDRPHLCRYDLVLMENVETFFQPILCSKQQM.

An N-terminal signal peptide occupies residues 1–16 (MLRLCFLLSFMCLVKS). N-linked (GlcNAc...) asparagine glycosylation occurs at Asn66. The active-site Nucleophile is Ser154. Asp178 functions as the Charge relay system in the catalytic mechanism. Cysteines 233 and 246 form a disulfide. The active-site Charge relay system is the His248. 3 disulfide bridges follow: Cys270–Cys281, Cys284–Cys292, and Cys427–Cys446.

This sequence belongs to the AB hydrolase superfamily. Lipase family. As to quaternary structure, interacts with TTMP/C3orf52.

It is found in the secreted. The protein resides in the cell membrane. It carries out the reaction 1-hexadecanoyl-2-(9Z-octadecenoyl)-sn-glycero-3-phosphate + H2O = 2-(9Z-octadecenoyl)-sn-glycero-3-phosphate + hexadecanoate + H(+). Its function is as follows. Hydrolyzes specifically phosphatidic acid (PA) to produce 2-acyl lysophosphatidic acid (LPA; a potent bioactive lipid mediator) and fatty acid. Does not hydrolyze other phospholipids, like phosphatidylserine (PS), phosphatidylcholine (PC) and phosphatidylethanolamine (PE) or triacylglycerol (TG). The chain is Lipase member H (Liph) from Rattus norvegicus (Rat).